A 284-amino-acid polypeptide reads, in one-letter code: 4-hydroxy-3-methylbut-2-enyl diphosphate reductase (284 aa).

[4Fe-4S] cluster is bound at residue Cys-12. (2E)-4-hydroxy-3-methylbut-2-enyl diphosphate-binding residues include His-40 and His-72. Residues His-40 and His-72 each coordinate dimethylallyl diphosphate. Isopentenyl diphosphate-binding residues include His-40 and His-72. Residue Cys-94 coordinates [4Fe-4S] cluster. His-122 lines the (2E)-4-hydroxy-3-methylbut-2-enyl diphosphate pocket. His-122 contacts dimethylallyl diphosphate. Residue His-122 coordinates isopentenyl diphosphate. Glu-124 (proton donor) is an active-site residue. A (2E)-4-hydroxy-3-methylbut-2-enyl diphosphate-binding site is contributed by Thr-161. [4Fe-4S] cluster is bound at residue Cys-193. Ser-221, Asn-223, and Ser-264 together coordinate (2E)-4-hydroxy-3-methylbut-2-enyl diphosphate. Dimethylallyl diphosphate is bound by residues Ser-221, Asn-223, and Ser-264. Isopentenyl diphosphate-binding residues include Ser-221, Asn-223, and Ser-264.

It belongs to the IspH family. [4Fe-4S] cluster serves as cofactor.

It carries out the reaction isopentenyl diphosphate + 2 oxidized [2Fe-2S]-[ferredoxin] + H2O = (2E)-4-hydroxy-3-methylbut-2-enyl diphosphate + 2 reduced [2Fe-2S]-[ferredoxin] + 2 H(+). It catalyses the reaction dimethylallyl diphosphate + 2 oxidized [2Fe-2S]-[ferredoxin] + H2O = (2E)-4-hydroxy-3-methylbut-2-enyl diphosphate + 2 reduced [2Fe-2S]-[ferredoxin] + 2 H(+). It functions in the pathway isoprenoid biosynthesis; dimethylallyl diphosphate biosynthesis; dimethylallyl diphosphate from (2E)-4-hydroxy-3-methylbutenyl diphosphate: step 1/1. The protein operates within isoprenoid biosynthesis; isopentenyl diphosphate biosynthesis via DXP pathway; isopentenyl diphosphate from 1-deoxy-D-xylulose 5-phosphate: step 6/6. In terms of biological role, catalyzes the conversion of 1-hydroxy-2-methyl-2-(E)-butenyl 4-diphosphate (HMBPP) into a mixture of isopentenyl diphosphate (IPP) and dimethylallyl diphosphate (DMAPP). Acts in the terminal step of the DOXP/MEP pathway for isoprenoid precursor biosynthesis. This is 4-hydroxy-3-methylbut-2-enyl diphosphate reductase from Dehalococcoides mccartyi (strain ATCC BAA-2266 / KCTC 15142 / 195) (Dehalococcoides ethenogenes (strain 195)).